We begin with the raw amino-acid sequence, 473 residues long: Cannabinoid receptor 1 (473 aa).

At 1–117 the chain is on the extracellular side; it reads MKSILDGLAD…CFMILNPSQQ (117 aa). The segment at 2–23 is required for mitochondrial localization; sequence KSILDGLADTTFRTITTDLLYV. N-linked (GlcNAc...) asparagine glycosylation is found at N78 and N84. The chain crosses the membrane as a helical span at residues 118–143; that stretch reads LAIAVLSLTLGTFTVLENLLVLCVIL. Residues 144–155 lie on the Cytoplasmic side of the membrane; sequence HSRSLRCRPSYH. Residues 156 to 176 traverse the membrane as a helical segment; it reads FIGSLAVADLLGSVIFVYSFV. Topologically, residues 177–188 are extracellular; it reads DFHVFHRKDSPN. Residues 189 to 213 traverse the membrane as a helical segment; it reads VFLFKLGGVTASFTASVGSLFLTAI. The Cytoplasmic segment spans residues 214 to 233; the sequence is DRYISIHRPLAYKRIVTRPK. A helical membrane pass occupies residues 234–256; sequence AVVAFCLMWTIAIVIAVLPLLGW. Residues 257 to 274 lie on the Extracellular side of the membrane; it reads NCKKLQSVCSDIFPLIDE. The chain crosses the membrane as a helical span at residues 275-300; the sequence is TYLMFWIGVTSVLLLFIVYAYMYILW. The Cytoplasmic portion of the chain corresponds to 301 to 345; it reads KAHSHAVRMIQRGTQKSIIIHTSEDGKVQVTRPDQARMDIRLAKT. Residues 346 to 366 form a helical membrane-spanning segment; that stretch reads LVLILVVLIICWGPLLAIMVY. The Extracellular segment spans residues 367 to 378; that stretch reads DVFGKMNKLIKT. The chain crosses the membrane as a helical span at residues 379–400; it reads VFAFCSMLCLLNSTVNPIIYAL. Residues 401–473 lie on the Cytoplasmic side of the membrane; sequence RSKDLRHAFR…VSTDTSAEAL (73 aa). A lipid anchor (S-palmitoyl cysteine) is attached at C416. Phosphoserine is present on residues S426 and S430.

The protein belongs to the G-protein coupled receptor 1 family. In terms of assembly, interacts (via C-terminus) with CNRIP1. Associates with G protein alpha subunits, including G(i) alpha-1/GNAI1, G(i) alpha-3/GNAI3 and G(o)-alpha/GNAO1; palmitoylation is important for interaction with GNAI3 and GNAO1. Post-translationally, palmitoylation at Cys-416 is important for recruitment at both plasma membrane and lipid rafts and association with G protein alpha subunits. In terms of tissue distribution, expressed in the brain, in the striatum, medial septum, descending arm of the band of Broca, the amygdaloid nucleus, the hippocampus and cortex (at protein level). High levels in the lateral striatum. In rostral brain regions, high expression levels in the dorsal lateral striatum, while in the caudal brain regions, high levels are observed in the ventral lateral striatum. Expressed in monocytes/macrophages (at protein level). Expressed in striated muscles and in vascular smooth muscles cells (at protein level).

Its subcellular location is the cell membrane. The protein localises to the mitochondrion outer membrane. It is found in the cell projection. The protein resides in the axon. It localises to the presynapse. Hemopressin, a peptide derived from hemoglobin subunit alpha (HBA1 and/or HBA2), acts as an antagonist peptide: hemopressin-binding efficiently blocks cannabinoid receptor CNR1 and subsequent signaling. Its function is as follows. G-protein coupled receptor for cannabinoids, including endocannabinoids (eCBs), such as N-arachidonoylethanolamide (also called anandamide or AEA) and 2-arachidonoylglycerol (2-AG). Mediates many cannabinoid-induced effects, acting, among others, on food intake, memory loss, gastrointestinal motility, catalepsy, ambulatory activity, anxiety, chronic pain. Signaling typically involves reduction in cyclic AMP. In the hypothalamus, may have a dual effect on mitochondrial respiration depending upon the agonist dose and possibly upon the cell type. Increases respiration at low doses, while decreases respiration at high doses. At high doses, CNR1 signal transduction involves G-protein alpha-i protein activation and subsequent inhibition of mitochondrial soluble adenylate cyclase, decrease in cyclic AMP concentration, inhibition of protein kinase A (PKA)-dependent phosphorylation of specific subunits of the mitochondrial electron transport system, including NDUFS2. In the hypothalamus, inhibits leptin-induced reactive oxygen species (ROS) formation and mediates cannabinoid-induced increase in SREBF1 and FASN gene expression. In response to cannabinoids, drives the release of orexigenic beta-endorphin, but not that of melanocyte-stimulating hormone alpha/alpha-MSH, from hypothalamic POMC neurons, hence promoting food intake. In the hippocampus, regulates cellular respiration and energy production in response to cannabinoids. Involved in cannabinoid-dependent depolarization-induced suppression of inhibition (DSI), a process in which depolarization of CA1 postsynaptic pyramidal neurons mobilizes eCBs, which retrogradely activate presynaptic CB1 receptors, transiently decreasing GABAergic inhibitory neurotransmission. Also reduces excitatory synaptic transmission. In superior cervical ganglions and cerebral vascular smooth muscle cells, inhibits voltage-gated Ca(2+) channels in a constitutive, as well as agonist-dependent manner. Induces leptin production in adipocytes and reduces LRP2-mediated leptin clearance in the kidney, hence participating in hyperleptinemia. In adipose tissue, CNR1 signaling leads to increased expression of SREBF1, ACACA and FASN genes. In the liver, activation by endocannabinoids leads to increased de novo lipogenesis and reduced fatty acid catabolism, associated with increased expression of SREBF1/SREBP-1, GCK, ACACA, ACACB and FASN genes. May also affect de novo cholesterol synthesis and HDL-cholesteryl ether uptake. Peripherally modulates energy metabolism. In high carbohydrate diet-induced obesity, may decrease the expression of mitochondrial dihydrolipoyl dehydrogenase/DLD in striated muscles, as well as that of selected glucose/ pyruvate metabolic enzymes, hence affecting energy expenditure through mitochondrial metabolism. In response to cannabinoid anandamide, elicits a pro-inflammatory response in macrophages, which involves NLRP3 inflammasome activation and IL1B and IL18 secretion. In macrophages infiltrating pancreatic islets, this process may participate in the progression of type-2 diabetes and associated loss of pancreatic beta-cells. In Rattus norvegicus (Rat), this protein is Cannabinoid receptor 1 (Cnr1).